Consider the following 445-residue polypeptide: Zinc finger protein SHOOT GRAVITROPISM 5 (445 aa).

Residues Ser22–Ser31 show a composition bias toward low complexity. Positions Ser22–Val59 are disordered. Residues Glu32–Thr42 show a composition bias toward polar residues. C2H2-type zinc fingers lie at residues Tyr73–His95, Tyr115–His145, and Trp151–His178. Zn(2+) is bound by residues Cys153, Cys156, His169, Cys173, Cys180, Cys182, His195, and Cys199. The CCHC-type 2; atypical zinc-finger motif lies at His178–Ala201. The SHR-binding stretch occupies residues Arg188–Ser200. 2 disordered regions span residues Arg203–Arg253 and Ser281–Ser314. Residues Thr214–Gln248 show a composition bias toward polar residues. The span at Ser281–Gln293 shows a compositional bias: low complexity. The stretch at Met340–Ser397 forms a coiled coil.

In terms of tissue distribution, mainly expressed in the endodermis, the gravity-sensing tissue in inflorescence stems. Mostly present in stems and flowers, and, to a lower extent, in seedlings, hypocotyls, roots and the shoot apical meristem (SAM).

The protein resides in the nucleus. Transcription factor involved in inflorescence stems gravitropism, probably by regulating starch accumulation in amyloplasts of graviperceptive cells. Required for stem circumnutation movements. Regulates lateral organ morphogenesis and gravitropic responses. Acts cooperatively with IDD16 to control silique and branche orientation. Involved in the establishment of auxin gradients through the regulation of auxin biosynthesis and transport. This Arabidopsis thaliana (Mouse-ear cress) protein is Zinc finger protein SHOOT GRAVITROPISM 5.